The chain runs to 555 residues: Neurofilament light polypeptide (555 aa).

Serine 2 carries the N-acetylserine modification. The interval 2–93 (SSFSYEPYYS…KSIRTQEKAQ (92 aa)) is head. At arginine 23 the chain carries Asymmetric dimethylarginine; alternate. Arginine 23 is subject to Omega-N-methylarginine; alternate. Arginine 30 carries the post-translational modification Omega-N-methylarginine. Tyrosine 43 carries the post-translational modification Phosphotyrosine. Serine 56, serine 67, and serine 103 each carry phosphoserine. The region spanning 90 to 401 (EKAQLQDLND…KLLEGEETRL (312 aa)) is the IF rod domain. Residues 94–125 (LQDLNDRFASFIERVHELEQQNKVLEAELLVL) form a coil 1A region. The tract at residues 126–138 (RQKHSEPSRFRAL) is linker 1. Residues 139–234 (YEQEIRDLRL…KVHEEEIAEL (96 aa)) are coil 1B. The segment at 235–253 (QAQIQYAQISVEMDVSSKP) is linker 12. Residues 254–272 (DLSAALKDIRAQYEKLAAK) form a coil 2A region. Residues 273 to 281 (NMQNAEEWF) are linker 2. A coil 2B region spans residues 282–397 (KSRFTVLTES…AAYRKLLEGE (116 aa)). Residues 398 to 444 (ETRLSFTSVGSLTTGYTQSSQVFGRSAYGGLQTSSYLMSARSFPSYY) are tail, subdomain A. Positions 398–555 (ETRLSFTSVG…GEEQATKKKD (158 aa)) are tail. Residues 445–555 (TSHVQEEQIE…GEEQATKKKD (111 aa)) are tail, subdomain B (acidic). The segment at 463 to 555 (KAEEAKDEPP…GEEQATKKKD (93 aa)) is disordered. Residues 472 to 540 (PSEGEAEEEE…ETKEAEEEEK (69 aa)) show a composition bias toward acidic residues. Serine 473 is modified (phosphoserine). Threonine 532 bears the Phosphothreonine mark. Positions 541–555 (KDEGAGEEQATKKKD) are enriched in basic and acidic residues.

The protein belongs to the intermediate filament family. Forms homodimers (in vitro). Forms heterodimers with NEFH or NEFM; which can further hetero-oligomerize (in vitro). Forms heterodimers with INA (in vitro). Interacts with ARHGEF28. Interacts with TRIM2. O-glycosylated. Post-translationally, phosphorylated in the head and rod regions by the PKC kinase PKN1, leading to the inhibition of polymerization. In terms of processing, ubiquitinated in the presence of TRIM2 and UBE2D1.

It localises to the cell projection. The protein resides in the axon. It is found in the cytoplasm. Its subcellular location is the cytoskeleton. Functionally, neurofilaments usually contain three intermediate filament proteins: NEFL, NEFM, and NEFH which are involved in the maintenance of neuronal caliber. May additionally cooperate with the neuronal intermediate filament proteins PRPH and INA to form neuronal filamentous networks. This Bos taurus (Bovine) protein is Neurofilament light polypeptide (NEFL).